Consider the following 417-residue polypeptide: UDP-N-acetylglucosamine 1-carboxyvinyltransferase (417 aa).

23–24 contacts phosphoenolpyruvate; sequence KN. Residue arginine 93 participates in UDP-N-acetyl-alpha-D-glucosamine binding. Aspartate 117 (proton donor) is an active-site residue. Positions 305 and 327 each coordinate UDP-N-acetyl-alpha-D-glucosamine.

The protein belongs to the EPSP synthase family. MurA subfamily.

It localises to the cytoplasm. It catalyses the reaction phosphoenolpyruvate + UDP-N-acetyl-alpha-D-glucosamine = UDP-N-acetyl-3-O-(1-carboxyvinyl)-alpha-D-glucosamine + phosphate. Its pathway is cell wall biogenesis; peptidoglycan biosynthesis. In terms of biological role, cell wall formation. Adds enolpyruvyl to UDP-N-acetylglucosamine. The chain is UDP-N-acetylglucosamine 1-carboxyvinyltransferase from Mycolicibacterium paratuberculosis (strain ATCC BAA-968 / K-10) (Mycobacterium paratuberculosis).